Here is a 285-residue protein sequence, read N- to C-terminus: Thrombin-like enzyme TLBm (285 aa).

One can recognise a Peptidase S1 domain in the interval V1–A273. 6 cysteine pairs are disulfide-bonded: C7–C181, C30–C46, C94–C284, C156–C234, C192–C209, and C224–C249. Residues H45 and D113 each act as charge relay system in the active site. The Charge relay system role is filled by S228.

This sequence belongs to the peptidase S1 family. Snake venom subfamily. Monomer. In terms of processing, homologous thrombin-like enzymes are N-glycosylated. This enzyme does not contain the consensus glycosylation sites, suggesting it is not glycosylated. Expressed by the venom gland.

The protein resides in the secreted. Its activity is regulated as follows. Inhibited by PMSF, disodium-EDTA, S(Dm) and soybean trypsin inhibitor (SBTI). SBTI and S(Dm) (the anti-hemorrhagic protein) acts as a non-competitive inhibitors that decrease the enzymatic activity. Its function is as follows. Thrombin-like enzyme that induces the formation of fibrin clot. Cleaves the Aalpha-chain of fibrinogen (FGA) with higher activity than the Bbeta-chain (FGB). Induces platelet aggregation in both platelet-rich plasma and in washed platelet preparations. This aggregation is strongly inhibited by preincubation of the enzyme with PMSF. The polypeptide is Thrombin-like enzyme TLBm (Bothrops marajoensis (Marajo lancehead)).